Here is an 87-residue protein sequence, read N- to C-terminus: Small ribosomal subunit protein bS20 (87 aa).

Belongs to the bacterial ribosomal protein bS20 family.

Its function is as follows. Binds directly to 16S ribosomal RNA. This is Small ribosomal subunit protein bS20 from Alkaliphilus metalliredigens (strain QYMF).